Here is a 1011-residue protein sequence, read N- to C-terminus: Vacuolar membrane protease (1011 aa).

The Cytoplasmic portion of the chain corresponds to 1–14; that stretch reads MKLTKAVFRFRRTN. Residues 15-35 form a helical membrane-spanning segment; sequence LSTLLVITYLVITTLYVWDHF. At 36-352 the chain is on the vacuolar side; sequence RYHFTLPSDY…WFVVWSARSL (317 aa). Zn(2+) contacts are provided by His-149, Asp-161, Glu-194, Glu-219, and His-293. Residues 353–373 form a helical membrane-spanning segment; that stretch reads FYWNCIILALFPSILAILFLV. Residues 374–390 lie on the Cytoplasmic side of the membrane; that stretch reads AYDMQLLKFNFWDAMLR. A helical membrane pass occupies residues 391–411; that stretch reads LPVSVCLAYFCVKLFQVLVGQ. The Vacuolar portion of the chain corresponds to 412 to 420; the sequence is LNPYVFSRD. The helical transmembrane segment at 421-441 threads the bilayer; that stretch reads YVSPILAEASMFIFMNYVILS. The Cytoplasmic segment spans residues 442–451; sequence SWERLRPLRD. A helical transmembrane segment spans residues 452–472; that stretch reads FKTVALVEVSMVLWIYLISVT. The Vacuolar portion of the chain corresponds to 473 to 487; the sequence is RWLRDSDYTATGLYP. Residues 488–508 traverse the membrane as a helical segment; that stretch reads FTIGYTFVSIGAIIGVFCATF. Residues 509-647 lie on the Cytoplasmic side of the membrane; sequence KAKLNPEDDS…SILNYDWSIQ (139 aa). A disordered region spans residues 534 to 585; it reads MQHQYQQHSQKHSNQHSPHHSTHHSAQHSVHHSPRQSIHQVPSSEQRQRDAS. Over residues 542–567 the composition is skewed to basic residues; it reads SQKHSNQHSPHHSTHHSAQHSVHHSP. The segment covering 568-578 has biased composition (polar residues); the sequence is RQSIHQVPSSE. Residues 648–668 traverse the membrane as a helical segment; sequence FMVVTPWVTYFTWICLDLIMG. Residues 669 to 681 are Vacuolar-facing; that stretch reads AMNQTIQESAKGT. Asn-671 carries an N-linked (GlcNAc...) asparagine glycan. A helical membrane pass occupies residues 682–702; the sequence is TFVTHMALIGSLLLSLPMLPF. Over 703 to 708 the chain is Cytoplasmic; that stretch reads TYKLHS. Residues 709-729 traverse the membrane as a helical segment; sequence FAGMLFLLLAVTTAVWTIVAP. Over 730–1011 the chain is Vacuolar; it reads PFTESSPLKL…MVSVTKYVEL (282 aa). Residues Asn-751, Asn-825, and Asn-854 are each glycosylated (N-linked (GlcNAc...) asparagine).

The protein belongs to the peptidase M28 family. Zn(2+) serves as cofactor.

Its subcellular location is the vacuole membrane. Its function is as follows. May be involved in vacuolar sorting and osmoregulation. The polypeptide is Vacuolar membrane protease (Eremothecium gossypii (strain ATCC 10895 / CBS 109.51 / FGSC 9923 / NRRL Y-1056) (Yeast)).